We begin with the raw amino-acid sequence, 971 residues long: Outer capsid protein VP2 (971 aa).

Belongs to the orbivirus VP2 family.

The protein localises to the virion. In terms of biological role, the VP2 protein is one of the two proteins (with VP5) which constitute the virus particle outer capsid. It is the major target of the host immunogenic response. This Epizootic hemorrhagic disease virus 1 (EHDV-1) protein is Outer capsid protein VP2 (Segment-2).